A 331-amino-acid chain; its full sequence is Protein RecA (331 aa).

Position 66-73 (66-73 (GPESSGKT)) interacts with ATP.

Belongs to the RecA family.

It localises to the cytoplasm. Functionally, can catalyze the hydrolysis of ATP in the presence of single-stranded DNA, the ATP-dependent uptake of single-stranded DNA by duplex DNA, and the ATP-dependent hybridization of homologous single-stranded DNAs. It interacts with LexA causing its activation and leading to its autocatalytic cleavage. The sequence is that of Protein RecA from Lactobacillus delbrueckii subsp. bulgaricus (strain ATCC 11842 / DSM 20081 / BCRC 10696 / JCM 1002 / NBRC 13953 / NCIMB 11778 / NCTC 12712 / WDCM 00102 / Lb 14).